The chain runs to 168 residues: Short form salivary protein D7R2 (168 aa).

A signal peptide spans Met-1–Ala-21. Cystine bridges form between Cys-30/Cys-62, Cys-43/Cys-168, and Cys-101/Cys-120. 2 residues coordinate noradrenaline: Glu-31 and Arg-46. Glu-31 contacts serotonin. Serotonin is bound by residues His-59, Tyr-118, Asp-135, and Glu-138. Histamine contacts are provided by Tyr-118, Asp-135, and Glu-138. Noradrenaline is bound by residues Asp-135 and Glu-138.

This sequence belongs to the PBP/GOBP family. As to expression, female saliva (at protein level). Female salivary gland. Not detected in female carcass without salivary glands. Not detected in male tissues.

It is found in the secreted. Functionally, modulates blood feeding of female mosquitoes on vertebrate species by binding and sequestering different mediators involved in the host response. Binds serotonin, noradrenaline, histamine and adrenaline. Inhibits histamine-, serotonin- and noradrenaline-induced smooth muscle contraction. Exhibits vasodilating activity. The protein is Short form salivary protein D7R2 of Anopheles gambiae (African malaria mosquito).